We begin with the raw amino-acid sequence, 302 residues long: N-acetylmuramic acid 6-phosphate etherase (302 aa).

The SIS domain maps to 58 to 221 (IGESFLNGGR…STGAMVKTGK (164 aa)). Glu-86 functions as the Proton donor in the catalytic mechanism. Residue Glu-117 is part of the active site.

This sequence belongs to the GCKR-like family. MurNAc-6-P etherase subfamily. In terms of assembly, homodimer.

The catalysed reaction is N-acetyl-D-muramate 6-phosphate + H2O = N-acetyl-D-glucosamine 6-phosphate + (R)-lactate. It functions in the pathway amino-sugar metabolism; N-acetylmuramate degradation. Specifically catalyzes the cleavage of the D-lactyl ether substituent of MurNAc 6-phosphate, producing GlcNAc 6-phosphate and D-lactate. The sequence is that of N-acetylmuramic acid 6-phosphate etherase from Clostridium botulinum (strain Okra / Type B1).